Here is a 444-residue protein sequence, read N- to C-terminus: Glutamyl-tRNA reductase (444 aa).

Residues 41-44 (TCNR), Ser102, 107-109 (ERE), and Gln113 contribute to the substrate site. Cys42 serves as the catalytic Nucleophile. 181-186 (GTGSYA) is a binding site for NADP(+).

It belongs to the glutamyl-tRNA reductase family. In terms of assembly, homodimer.

It carries out the reaction (S)-4-amino-5-oxopentanoate + tRNA(Glu) + NADP(+) = L-glutamyl-tRNA(Glu) + NADPH + H(+). The protein operates within porphyrin-containing compound metabolism; protoporphyrin-IX biosynthesis; 5-aminolevulinate from L-glutamyl-tRNA(Glu): step 1/2. Functionally, catalyzes the NADPH-dependent reduction of glutamyl-tRNA(Glu) to glutamate 1-semialdehyde (GSA). In Cutibacterium acnes (strain DSM 16379 / KPA171202) (Propionibacterium acnes), this protein is Glutamyl-tRNA reductase.